A 301-amino-acid chain; its full sequence is Glycine--tRNA ligase alpha subunit (301 aa).

It belongs to the class-II aminoacyl-tRNA synthetase family. Tetramer of two alpha and two beta subunits.

The protein resides in the cytoplasm. The catalysed reaction is tRNA(Gly) + glycine + ATP = glycyl-tRNA(Gly) + AMP + diphosphate. The chain is Glycine--tRNA ligase alpha subunit from Bordetella avium (strain 197N).